Consider the following 230-residue polypeptide: 7-cyano-7-deazaguanine synthase (230 aa).

14–24 contacts ATP; sequence LSGGLDSTTTL. Positions 194, 204, 207, and 210 each coordinate Zn(2+).

Belongs to the QueC family. It depends on Zn(2+) as a cofactor.

It catalyses the reaction 7-carboxy-7-deazaguanine + NH4(+) + ATP = 7-cyano-7-deazaguanine + ADP + phosphate + H2O + H(+). It participates in purine metabolism; 7-cyano-7-deazaguanine biosynthesis. Its function is as follows. Catalyzes the ATP-dependent conversion of 7-carboxy-7-deazaguanine (CDG) to 7-cyano-7-deazaguanine (preQ(0)). The protein is 7-cyano-7-deazaguanine synthase of Vesicomyosocius okutanii subsp. Calyptogena okutanii (strain HA).